A 619-amino-acid chain; its full sequence is Chitinase C (619 aa).

An N-terminal signal peptide occupies residues 1–30; the sequence is MRFRHKAAALAATLALPLAGLVGLASPAQA. The 104-residue stretch at 31-134 folds into the CBM2 domain; that stretch reads ATSATATFAK…KLNGGSCDGT (104 aa). The 86-residue stretch at 144–229 folds into the Fibronectin type-III domain; the sequence is APGTPTASNI…GAVKVTTTGG (86 aa). A disordered region spans residues 212–236; it reads ADQTGPASGAVKVTTTGGGDGGNPG. Positions 227–236 are enriched in gly residues; that stretch reads TGGGDGGNPG. The region spanning 240–619 is the GH18 domain; sequence EVKMGYFTNW…TPAVRTTRRH (380 aa). Residues 312–313 and 339–342 each bind chitin; these read DQ and GGWT. Catalysis depends on Glu382, which acts as the Proton donor. Chitin contacts are provided by residues Tyr383, 449 to 452, and Trp589; that span reads MTYD.

It belongs to the glycosyl hydrolase 18 family. Chitinase class II subfamily.

It catalyses the reaction Random endo-hydrolysis of N-acetyl-beta-D-glucosaminide (1-&gt;4)-beta-linkages in chitin and chitodextrins.. The polypeptide is Chitinase C (chiC) (Streptomyces lividans).